A 142-amino-acid polypeptide reads, in one-letter code: Large ribosomal subunit protein uL13 (142 aa).

It belongs to the universal ribosomal protein uL13 family. As to quaternary structure, part of the 50S ribosomal subunit.

Its function is as follows. This protein is one of the early assembly proteins of the 50S ribosomal subunit, although it is not seen to bind rRNA by itself. It is important during the early stages of 50S assembly. This chain is Large ribosomal subunit protein uL13, found in Ralstonia pickettii (strain 12J).